We begin with the raw amino-acid sequence, 636 residues long: Epithelial sodium channel subunit alpha (636 aa).

The segment at Met-1–Ala-28 is disordered. Residues Met-1 to Thr-77 are Cytoplasmic-facing. Residues Ala-78–Ile-98 form a helical membrane-spanning segment. The Extracellular segment spans residues Tyr-99–Ser-549. 10 disulfide bridges follow: Cys-126–Cys-293, Cys-218–Cys-225, Cys-270–Cys-277, Cys-381–Cys-466, Cys-403–Cys-443, Cys-403–Cys-462, Cys-407–Cys-458, Cys-416–Cys-443, Cys-416–Cys-466, and Cys-418–Cys-432. A helical membrane pass occupies residues Val-550–Leu-570. The Cytoplasmic portion of the chain corresponds to Ala-571 to Glu-636.

Belongs to the amiloride-sensitive sodium channel (TC 1.A.6) family. SCNN1A subfamily. Heterotrimer; containing an alpha/SCNN1A, a beta/SCNN1B and a gamma/SCNN1G subunit.

Its subcellular location is the apical cell membrane. The protein localises to the cell projection. The protein resides in the cilium. It localises to the cytoplasmic granule. It is found in the cytoplasm. Its subcellular location is the cytoplasmic vesicle. The protein localises to the secretory vesicle. The protein resides in the acrosome. It localises to the flagellum. It carries out the reaction Na(+)(in) = Na(+)(out). Originally identified and characterized by its inhibition by the diuretic drug amiloride. Its function is as follows. This is one of the three pore-forming subunits of the heterotrimeric epithelial sodium channel (ENaC), a critical regulator of sodium balance and fluid homeostasis. ENaC operates in epithelial tissues, where it mediates the electrodiffusion of sodium ions from extracellular fluid through the apical membrane of cells, with water following osmotically. In Anolis carolinensis (Green anole), this protein is Epithelial sodium channel subunit alpha.